The sequence spans 901 residues: Protein translocase subunit SecA (901 aa).

ATP-binding positions include glutamine 85, 103 to 107 (GEGKT), and aspartate 510. The segment at 848–901 (RINQNNLPVDENSQTTQNSETEDYSDRRIGRNEPCPCGSGKKYKHCHGSRVARQ) is disordered. Over residues 849–866 (INQNNLPVDENSQTTQNS) the composition is skewed to polar residues. Zn(2+)-binding residues include cysteine 882, cysteine 884, cysteine 893, and histidine 894. Positions 888–901 (KKYKHCHGSRVARQ) are enriched in basic residues.

It belongs to the SecA family. As to quaternary structure, monomer and homodimer. Part of the essential Sec protein translocation apparatus which comprises SecA, SecYEG and auxiliary proteins SecDF-YajC and YidC. Forms a complex with SecB. Zn(2+) serves as cofactor.

The protein localises to the cell inner membrane. It localises to the cytoplasm. It carries out the reaction ATP + H2O + cellular proteinSide 1 = ADP + phosphate + cellular proteinSide 2.. Part of the Sec protein translocase complex. Interacts with the SecYEG preprotein conducting channel. Has a central role in coupling the hydrolysis of ATP to the transfer of proteins into and across the cell membrane, serving both as a receptor for the preprotein-SecB complex and as an ATP-driven molecular motor driving the stepwise translocation of polypeptide chains across the membrane. The polypeptide is Protein translocase subunit SecA (Haemophilus influenzae (strain ATCC 51907 / DSM 11121 / KW20 / Rd)).